The sequence spans 187 residues: Pyridoxal 5'-phosphate synthase subunit PdxT (187 aa).

47–49 (GES) contacts L-glutamine. C76 functions as the Nucleophile in the catalytic mechanism. L-glutamine is bound by residues R102 and 128-129 (IR). Catalysis depends on charge relay system residues H165 and E167.

Belongs to the glutaminase PdxT/SNO family. As to quaternary structure, in the presence of PdxS, forms a dodecamer of heterodimers. Only shows activity in the heterodimer.

It catalyses the reaction aldehydo-D-ribose 5-phosphate + D-glyceraldehyde 3-phosphate + L-glutamine = pyridoxal 5'-phosphate + L-glutamate + phosphate + 3 H2O + H(+). It carries out the reaction L-glutamine + H2O = L-glutamate + NH4(+). Its pathway is cofactor biosynthesis; pyridoxal 5'-phosphate biosynthesis. Its function is as follows. Catalyzes the hydrolysis of glutamine to glutamate and ammonia as part of the biosynthesis of pyridoxal 5'-phosphate. The resulting ammonia molecule is channeled to the active site of PdxS. This is Pyridoxal 5'-phosphate synthase subunit PdxT from Methanococcus vannielii (strain ATCC 35089 / DSM 1224 / JCM 13029 / OCM 148 / SB).